Reading from the N-terminus, the 493-residue chain is Transcript termination protein OPG145 (493 aa).

A Helicase ATP-binding domain is found at 100-256 (MIKLKRPLYI…NSIINIAKLS (157 aa)). 113-120 (LACGFGKT) contacts ATP. Positions 206-209 (DESH) match the DESH box motif.

This sequence belongs to the helicase family. Poxviruses subfamily. Interacts with OPG087. Might be part of a transcription complex composed at least of OPG087, OPG110, and OPG145.

It is found in the virion. In terms of biological role, DNA helicase which seems to act as a postreplicative transcription termination factor. Involved in ATP-dependent release of nascent RNA. Forms a stable complex with single-stranded DNA, and to a lesser extent RNA. This Variola virus (isolate Human/India/Ind3/1967) (VARV) protein is Transcript termination protein OPG145 (OPG145).